The primary structure comprises 146 residues: Protein U1 (146 aa).

The protein belongs to the nanovirus U1 protein family.

In Subterranean clover stunt virus (strain F) (SCSV), this protein is Protein U1 (DNA-U1).